A 1350-amino-acid polypeptide reads, in one-letter code: Ubiquitin carboxyl-terminal hydrolase 47 (1350 aa).

The interval 111–138 (DGEQPQLTSDESGTADSSGLDDSSQEKF) is disordered. Polar residues predominate over residues 115-132 (PQLTSDESGTADSSGLDD). Positions 173 to 548 (VGLVNQAMTC…NAYMLMYRLK (376 aa)) constitute a USP domain. The active-site Nucleophile is the cysteine 182. Residues 409–437 (EDEKSPQTDSCTDSGAENEGSCHSDQMSN) form a disordered region. Polar residues predominate over residues 415-437 (QTDSCTDSGAENEGSCHSDQMSN). Histidine 487 serves as the catalytic Proton acceptor. Disordered regions lie at residues 815-836 (HPRP…PQED) and 859-1000 (SLQQ…ESGK). A compositionally biased stretch (polar residues) spans 859 to 877 (SLQQHQDGGNGDSSKSTEG). The segment covering 916–926 (PEERSDSDVNN) has biased composition (basic and acidic residues). A compositionally biased stretch (low complexity) spans 929–945 (STSSVDSDILSSSHSSD). Basic and acidic residues predominate over residues 973–982 (KANDGKKETW). The segment covering 983–996 (DTAEEDSGTDSEYD) has biased composition (acidic residues).

The protein belongs to the peptidase C19 family. USP47 subfamily.

Its subcellular location is the cytoplasm. It catalyses the reaction Thiol-dependent hydrolysis of ester, thioester, amide, peptide and isopeptide bonds formed by the C-terminal Gly of ubiquitin (a 76-residue protein attached to proteins as an intracellular targeting signal).. Functionally, ubiquitin-specific protease that specifically deubiquitinates monoubiquitinated DNA polymerase beta (polb), stabilizing polb thereby playing a role in base-excision repair (BER). This chain is Ubiquitin carboxyl-terminal hydrolase 47 (usp47), found in Xenopus laevis (African clawed frog).